Consider the following 474-residue polypeptide: Cysteine--tRNA ligase (474 aa).

Cysteine 30 is a binding site for Zn(2+). A 'HIGH' region motif is present at residues 32–42; it reads PTVYNYAHIGN. Zn(2+) contacts are provided by cysteine 215, histidine 240, and glutamate 244. The 'KMSKS' region motif lies at 272–276; it reads KMSKS. An ATP-binding site is contributed by lysine 275.

The protein belongs to the class-I aminoacyl-tRNA synthetase family. As to quaternary structure, monomer. It depends on Zn(2+) as a cofactor.

It is found in the cytoplasm. The enzyme catalyses tRNA(Cys) + L-cysteine + ATP = L-cysteinyl-tRNA(Cys) + AMP + diphosphate. This is Cysteine--tRNA ligase from Brachyspira hyodysenteriae (strain ATCC 49526 / WA1).